The primary structure comprises 488 residues: Protein nucleotidyltransferase YdiU (488 aa).

Gly-91, Gly-93, Arg-94, Lys-114, Asp-126, Gly-127, Arg-177, and Arg-184 together coordinate ATP. Asp-253 serves as the catalytic Proton acceptor. Mg(2+) contacts are provided by Asn-254 and Asp-263. An ATP-binding site is contributed by Asp-263.

Belongs to the SELO family. Mg(2+) serves as cofactor. The cofactor is Mn(2+).

It catalyses the reaction L-seryl-[protein] + ATP = 3-O-(5'-adenylyl)-L-seryl-[protein] + diphosphate. The catalysed reaction is L-threonyl-[protein] + ATP = 3-O-(5'-adenylyl)-L-threonyl-[protein] + diphosphate. It carries out the reaction L-tyrosyl-[protein] + ATP = O-(5'-adenylyl)-L-tyrosyl-[protein] + diphosphate. The enzyme catalyses L-histidyl-[protein] + UTP = N(tele)-(5'-uridylyl)-L-histidyl-[protein] + diphosphate. It catalyses the reaction L-seryl-[protein] + UTP = O-(5'-uridylyl)-L-seryl-[protein] + diphosphate. The catalysed reaction is L-tyrosyl-[protein] + UTP = O-(5'-uridylyl)-L-tyrosyl-[protein] + diphosphate. Functionally, nucleotidyltransferase involved in the post-translational modification of proteins. It can catalyze the addition of adenosine monophosphate (AMP) or uridine monophosphate (UMP) to a protein, resulting in modifications known as AMPylation and UMPylation. This Bacillus cereus (strain ZK / E33L) protein is Protein nucleotidyltransferase YdiU.